Reading from the N-terminus, the 148-residue chain is D-aminoacyl-tRNA deacylase (148 aa).

The Gly-cisPro motif, important for rejection of L-amino acids motif lies at 137–138 (GP).

It belongs to the DTD family. In terms of assembly, homodimer.

The protein localises to the cytoplasm. The catalysed reaction is glycyl-tRNA(Ala) + H2O = tRNA(Ala) + glycine + H(+). It catalyses the reaction a D-aminoacyl-tRNA + H2O = a tRNA + a D-alpha-amino acid + H(+). An aminoacyl-tRNA editing enzyme that deacylates mischarged D-aminoacyl-tRNAs. Also deacylates mischarged glycyl-tRNA(Ala), protecting cells against glycine mischarging by AlaRS. Acts via tRNA-based rather than protein-based catalysis; rejects L-amino acids rather than detecting D-amino acids in the active site. By recycling D-aminoacyl-tRNA to D-amino acids and free tRNA molecules, this enzyme counteracts the toxicity associated with the formation of D-aminoacyl-tRNA entities in vivo and helps enforce protein L-homochirality. In Finegoldia magna (strain ATCC 29328 / DSM 20472 / WAL 2508) (Peptostreptococcus magnus), this protein is D-aminoacyl-tRNA deacylase.